The following is a 115-amino-acid chain: Ig heavy chain V-III region J606 (115 aa).

One can recognise an Ig-like domain in the interval 1–114 (EVKLEESGGG…WGQGTLVTVS (114 aa)). A disulfide bond links C22 and C98.

This chain is Ig heavy chain V-III region J606, found in Mus musculus (Mouse).